Reading from the N-terminus, the 445-residue chain is Exodeoxyribonuclease 7 large subunit (445 aa).

The protein belongs to the XseA family. Heterooligomer composed of large and small subunits.

Its subcellular location is the cytoplasm. The enzyme catalyses Exonucleolytic cleavage in either 5'- to 3'- or 3'- to 5'-direction to yield nucleoside 5'-phosphates.. Its function is as follows. Bidirectionally degrades single-stranded DNA into large acid-insoluble oligonucleotides, which are then degraded further into small acid-soluble oligonucleotides. The protein is Exodeoxyribonuclease 7 large subunit of Staphylococcus haemolyticus (strain JCSC1435).